The sequence spans 190 residues: Lipid A 1-phosphatase (190 aa).

Transmembrane regions (helical) follow at residues 22–42, 60–80, 117–137, 145–162, and 164–184; these read LLAL…PKVP, FIPT…VGLF, GNFN…AFLM, YFWL…RIYL, and MHTI…VSLF.

The protein belongs to the lipid A LpxE 1-phosphatase family. Requires Does not require divalent cations. as cofactor.

Its subcellular location is the cell inner membrane. Its pathway is bacterial outer membrane biogenesis; LPS lipid A biosynthesis. Functionally, removes the 1-phosphate group from tetra- and probably hexaacylated lipid A species, has no requirement for the Kdo moiety of lipid A. Has no 4'-phosphatase activity. Has no activity on phospholipids (phosphatidylglycerol, phosphatidylethanolamine or cardiolipin). This enzyme has to act before EptA can attach phosphoethanolamine to the 1-position of lipid A. Absence of the 1-phosphate group renders the bacteria partially resistant to host-derived cationic antimicrobial peptides (CAMP), allowing it to camouflage itself from the host innate immune response, and plays a role in the long-term colonization of the host's stomach. The protein is Lipid A 1-phosphatase of Helicobacter pylori (strain ATCC 700392 / 26695) (Campylobacter pylori).